We begin with the raw amino-acid sequence, 275 residues long: 2-dehydro-3-deoxyphosphooctonate aldolase (275 aa).

Belongs to the KdsA family.

The protein localises to the cytoplasm. It catalyses the reaction D-arabinose 5-phosphate + phosphoenolpyruvate + H2O = 3-deoxy-alpha-D-manno-2-octulosonate-8-phosphate + phosphate. The protein operates within carbohydrate biosynthesis; 3-deoxy-D-manno-octulosonate biosynthesis; 3-deoxy-D-manno-octulosonate from D-ribulose 5-phosphate: step 2/3. It functions in the pathway bacterial outer membrane biogenesis; lipopolysaccharide biosynthesis. In Francisella tularensis subsp. mediasiatica (strain FSC147), this protein is 2-dehydro-3-deoxyphosphooctonate aldolase.